The primary structure comprises 201 residues: Peptidyl-tRNA hydrolase (201 aa).

Tyrosine 15 serves as a coordination point for tRNA. Histidine 20 functions as the Proton acceptor in the catalytic mechanism. Tyrosine 66, asparagine 68, and asparagine 114 together coordinate tRNA.

It belongs to the PTH family. In terms of assembly, monomer.

It is found in the cytoplasm. The enzyme catalyses an N-acyl-L-alpha-aminoacyl-tRNA + H2O = an N-acyl-L-amino acid + a tRNA + H(+). In terms of biological role, hydrolyzes ribosome-free peptidyl-tRNAs (with 1 or more amino acids incorporated), which drop off the ribosome during protein synthesis, or as a result of ribosome stalling. Functionally, catalyzes the release of premature peptidyl moieties from peptidyl-tRNA molecules trapped in stalled 50S ribosomal subunits, and thus maintains levels of free tRNAs and 50S ribosomes. The protein is Peptidyl-tRNA hydrolase of Burkholderia mallei (strain ATCC 23344).